The primary structure comprises 409 residues: Sperm equatorial segment protein 1 (409 aa).

A signal peptide spans 1 to 18 (MKPVVLVALLWLWPSSFL). N-linked (GlcNAc...) asparagine glycosylation is present at Asn132. Residues 141 to 223 (EPYIEKEPEP…TTNTQGTPNT (83 aa)) form a disordered region. Acidic residues predominate over residues 167-177 (PEPEPESESAP). Over residues 198–208 (NKVRTGTSRMS) the composition is skewed to polar residues. Positions 209-223 (TVITQTTNTQGTPNT) are enriched in low complexity.

It belongs to the SPESP1 family. Post-translationally, glycosylated. In testis there are two predominant forms of 77- and 67-kDa and a form of 47-kDa, whereas in epididymal sperm from caput, corpus, and cauda there are two forms of 47- and 43-kDa. Testis forms contain complex carbohydrate residues. Epididymal sperm forms are N-glycosylated. Then undergoes significant glycosylation in the testis and that the majority of these glycoconjugates are removed by the time sperm reach the caput epididymis.

The protein localises to the cytoplasmic vesicle. The protein resides in the secretory vesicle. It is found in the acrosome. Functionally, involved in fertilization ability of sperm. In Rattus norvegicus (Rat), this protein is Sperm equatorial segment protein 1.